Consider the following 642-residue polypeptide: Threonine--tRNA ligase (642 aa).

The TGS domain occupies 1–61; the sequence is MPIITLPDGS…STDSDLSIIT (61 aa). A catalytic region spans residues 243 to 534; it reads DHRKIGKQLD…LIEEYAGKFP (292 aa). Zn(2+)-binding residues include cysteine 334, histidine 385, and histidine 511.

It belongs to the class-II aminoacyl-tRNA synthetase family. Homodimer. Zn(2+) is required as a cofactor.

The protein resides in the cytoplasm. It carries out the reaction tRNA(Thr) + L-threonine + ATP = L-threonyl-tRNA(Thr) + AMP + diphosphate + H(+). Functionally, catalyzes the attachment of threonine to tRNA(Thr) in a two-step reaction: L-threonine is first activated by ATP to form Thr-AMP and then transferred to the acceptor end of tRNA(Thr). Also edits incorrectly charged L-seryl-tRNA(Thr). The sequence is that of Threonine--tRNA ligase from Shewanella denitrificans (strain OS217 / ATCC BAA-1090 / DSM 15013).